The chain runs to 199 residues: 7-methyl-GTP pyrophosphatase (199 aa).

D76 functions as the Proton acceptor in the catalytic mechanism.

It belongs to the Maf family. YceF subfamily. A divalent metal cation is required as a cofactor.

It is found in the cytoplasm. The catalysed reaction is N(7)-methyl-GTP + H2O = N(7)-methyl-GMP + diphosphate + H(+). Functionally, nucleoside triphosphate pyrophosphatase that hydrolyzes 7-methyl-GTP (m(7)GTP). May have a dual role in cell division arrest and in preventing the incorporation of modified nucleotides into cellular nucleic acids. The chain is 7-methyl-GTP pyrophosphatase from Mesorhizobium japonicum (strain LMG 29417 / CECT 9101 / MAFF 303099) (Mesorhizobium loti (strain MAFF 303099)).